A 119-amino-acid chain; its full sequence is Ribonuclease P protein component (119 aa).

Positions 1–24 are disordered; it reads MRGSSRFRPHEKLRASDDYQRVKR. The span at 8–21 shows a compositional bias: basic and acidic residues; that stretch reads RPHEKLRASDDYQR.

It belongs to the RnpA family. Consists of a catalytic RNA component (M1 or rnpB) and a protein subunit.

The enzyme catalyses Endonucleolytic cleavage of RNA, removing 5'-extranucleotides from tRNA precursor.. Functionally, RNaseP catalyzes the removal of the 5'-leader sequence from pre-tRNA to produce the mature 5'-terminus. It can also cleave other RNA substrates such as 4.5S RNA. The protein component plays an auxiliary but essential role in vivo by binding to the 5'-leader sequence and broadening the substrate specificity of the ribozyme. The protein is Ribonuclease P protein component of Syntrophobacter fumaroxidans (strain DSM 10017 / MPOB).